Here is a 971-residue protein sequence, read N- to C-terminus: Exportin-2 (971 aa).

Residue Met1 is modified to N-acetylmethionine. The Importin N-terminal domain maps to 29–102 (AEKFLESVEG…KANIVHLMLS (74 aa)). Ser112 is subject to Phosphoserine. Lys574 and Lys824 each carry N6-acetyllysine. Ser931 is subject to Phosphoserine.

Belongs to the XPO2/CSE1 family. As to quaternary structure, found in a complex with CSE1L/XPO2, Ran and KPNA2. Binds with high affinity to importin-alpha only in the presence of RanGTP. The complex is dissociated by the combined action of RanBP1 and RanGAP1. Interacts with CFTR.

Its subcellular location is the cytoplasm. The protein resides in the nucleus. Its function is as follows. Export receptor for importin-alpha. Mediates importin-alpha re-export from the nucleus to the cytoplasm after import substrates (cargos) have been released into the nucleoplasm. In the nucleus binds cooperatively to importin-alpha and to the GTPase Ran in its active GTP-bound form. Docking of this trimeric complex to the nuclear pore complex (NPC) is mediated through binding to nucleoporins. Upon transit of a nuclear export complex into the cytoplasm, disassembling of the complex and hydrolysis of Ran-GTP to Ran-GDP (induced by RANBP1 and RANGAP1, respectively) cause release of the importin-alpha from the export receptor. CSE1L/XPO2 then return to the nuclear compartment and mediate another round of transport. The directionality of nuclear export is thought to be conferred by an asymmetric distribution of the GTP- and GDP-bound forms of Ran between the cytoplasm and nucleus. The sequence is that of Exportin-2 (CSE1L) from Bos taurus (Bovine).